A 160-amino-acid chain; its full sequence is MPAFDIVSEVDNVELKNAVDNATRELATRFDFRGVDASFELKGENIKIKAEDDFQLSQLVDILRGNLAKRGVDARAMDIKDAVHSGKNFYQDIDFKQGVDTLIAKKLVKEIKASNIKVQAAIQGEQLRITGKKRDDLQAVMALVREGDFGQPFQFTNFRD.

This sequence belongs to the YajQ family.

In terms of biological role, nucleotide-binding protein. This chain is Nucleotide-binding protein VFMJ11_1323, found in Aliivibrio fischeri (strain MJ11) (Vibrio fischeri).